We begin with the raw amino-acid sequence, 867 residues long: DNA mismatch repair protein MutS (867 aa).

609 to 616 contacts ATP; that stretch reads GPNMSGKS.

The protein belongs to the DNA mismatch repair MutS family.

This protein is involved in the repair of mismatches in DNA. It is possible that it carries out the mismatch recognition step. This protein has a weak ATPase activity. The polypeptide is DNA mismatch repair protein MutS (Latilactobacillus sakei subsp. sakei (strain 23K) (Lactobacillus sakei subsp. sakei)).